The following is a 372-amino-acid chain: Homoserine O-acetyltransferase (372 aa).

Residues 43–353 (NAILIFHALT…DKGHDSFLLK (311 aa)) enclose the AB hydrolase-1 domain. Residue Ser148 is the Nucleophile of the active site. Arg218 provides a ligand contact to substrate. Residues Asp314 and His347 contribute to the active site. Substrate is bound at residue Asp348.

The protein belongs to the AB hydrolase superfamily. MetX family. As to quaternary structure, homodimer.

It is found in the cytoplasm. It carries out the reaction L-homoserine + acetyl-CoA = O-acetyl-L-homoserine + CoA. It participates in amino-acid biosynthesis; L-methionine biosynthesis via de novo pathway; O-acetyl-L-homoserine from L-homoserine: step 1/1. Its function is as follows. Transfers an acetyl group from acetyl-CoA to L-homoserine, forming acetyl-L-homoserine. The polypeptide is Homoserine O-acetyltransferase (Pelagibacter ubique (strain HTCC1062)).